A 590-amino-acid polypeptide reads, in one-letter code: Leukocyte immunoglobulin-like receptor subfamily B member 5 (590 aa).

The first 23 residues, 1–23 (MTLTLSVLICLGLSVGPRTCVQA), serve as a signal peptide directing secretion. Residues 24–458 (GTLPKPTLWA…PQSGLGRHLG (435 aa)) lie on the Extracellular side of the membrane. Ig-like C2-type domains lie at 27–116 (PKPT…LELV), 111–228 (DPLE…SLLI), 224–313 (PSLL…DPLD), and 337–418 (GENV…LVVS). C49 and C98 are disulfide-bonded. N-linked (GlcNAc...) asparagine glycosylation occurs at N139. 2 cysteine pairs are disulfide-bonded: C144–C195 and C244–C295. Residues N279 and N339 are each glycosylated (N-linked (GlcNAc...) asparagine). C344 and C395 are oxidised to a cystine. Positions 416 to 433 (VVSGPSGDPSLSPTGSTP) are enriched in low complexity. Residues 416–449 (VVSGPSGDPSLSPTGSTPTPGPEDQPLTPTGLDP) are disordered. The chain crosses the membrane as a helical span at residues 459–479 (VVTGVSVAFVLLLFLLLFLLL). Residues 480–590 (RHRHQSKHRT…PSIYAPLAIH (111 aa)) lie on the Cytoplasmic side of the membrane. 2 disordered regions span residues 488–514 (RTSA…KRAS) and 529–550 (KDTQ…EAPQ). S514 bears the Phosphoserine mark. The short motif at 552-557 (VTYAQL) is the ITIM motif 1 element. Residues 562–578 (LRREATEPPPSQEREPP) are compositionally biased toward basic and acidic residues. The tract at residues 562-590 (LRREATEPPPSQEREPPAEPSIYAPLAIH) is disordered. Residues 582 to 587 (SIYAPL) carry the ITIM motif 2 motif.

In terms of tissue distribution, detected in a natural killer (NK) cells.

The protein resides in the membrane. Functionally, may act as receptor for class I MHC antigens. In Homo sapiens (Human), this protein is Leukocyte immunoglobulin-like receptor subfamily B member 5 (LILRB5).